The following is a 387-amino-acid chain: MLPLSIKDDEYKPAKFNLVVKLSGWFRSILADKTSRNLFFFLCLNLSFAFVELLYGIWSNSLGLISDSFHMFFDCTALLAGLAASVISRWRSNDSFSYGYVRAEVLAGFVNGLFLIFTAFFIFSEGVERALEPPDVHHDRLLPVSIAGLLVNLVGIFVFQHGGHGHSHGGDDHGHSHSLFNGSAAHGHSHGGHGHSHGGHGHSHESKHGHDHGHSHGGHGHSHDDQHCHDDHTLTPGKGSSKQILQGVFLHIVADTLGSVGVIISAILMQKYDLMIADPICSMLIALLIGVSVVPLLRESIGILMQRTPPSLDHALPECYQRVQQLQGVYNLQEPHFWTLCTDVYIGTLKLLVAPDADSRWILSQTHNIFTQVGVRQLYVQIEVAAM.

Over 1–37 the chain is Cytoplasmic; the sequence is MLPLSIKDDEYKPAKFNLVVKLSGWFRSILADKTSRN. A helical membrane pass occupies residues 38–58; the sequence is LFFFLCLNLSFAFVELLYGIW. Residues 59–67 lie on the Lumenal side of the membrane; the sequence is SNSLGLISD. The helical transmembrane segment at 68 to 88 threads the bilayer; it reads SFHMFFDCTALLAGLAASVIS. The Cytoplasmic portion of the chain corresponds to 89 to 102; it reads RWRSNDSFSYGYVR. The helical transmembrane segment at 103-123 threads the bilayer; the sequence is AEVLAGFVNGLFLIFTAFFIF. Residues 124 to 140 are Lumenal-facing; the sequence is SEGVERALEPPDVHHDR. The helical transmembrane segment at 141–161 threads the bilayer; it reads LLPVSIAGLLVNLVGIFVFQH. The segment at 161–232 is his-rich loop; the sequence is HGGHGHSHGG…HDDQHCHDDH (72 aa). Over 162–247 the chain is Cytoplasmic; the sequence is GGHGHSHGGD…KGSSKQILQG (86 aa). The tract at residues 167-237 is disordered; the sequence is SHGGDDHGHS…CHDDHTLTPG (71 aa). Over residues 187-201 the composition is skewed to basic residues; sequence GHSHGGHGHSHGGHG. Composition is skewed to basic and acidic residues over residues 202 to 214 and 221 to 233; these read HSHE…DHGH and HSHD…DDHT. The chain crosses the membrane as a helical span at residues 248–268; sequence VFLHIVADTLGSVGVIISAIL. The Lumenal portion of the chain corresponds to 269–273; the sequence is MQKYD. The helical transmembrane segment at 274-294 threads the bilayer; that stretch reads LMIADPICSMLIALLIGVSVV. Topologically, residues 295 to 387 are cytoplasmic; the sequence is PLLRESIGIL…LYVQIEVAAM (93 aa).

The protein belongs to the cation diffusion facilitator (CDF) transporter (TC 2.A.4) family. SLC30A subfamily. In terms of assembly, homooligomer.

The protein localises to the golgi apparatus membrane. The protein resides in the cytoplasmic vesicle. It localises to the golgi apparatus. It is found in the trans-Golgi network. Its subcellular location is the sarcoplasmic reticulum. The protein localises to the mitochondrion. The enzyme catalyses Zn(2+)(in) = Zn(2+)(out). In terms of biological role, zinc ion transporter mediating zinc entry from the cytosol into the lumen of organelles along the secretory pathway. By contributing to zinc ion homeostasis within the early secretory pathway, regulates the activation and folding of enzymes like alkaline phosphatases. The sequence is that of Zinc transporter 7 (slc30a7) from Danio rerio (Zebrafish).